The sequence spans 151 residues: 6,7-dimethyl-8-ribityllumazine synthase (151 aa).

5-amino-6-(D-ribitylamino)uracil is bound by residues Phe23, 55–57 (AYE), and 79–81 (AVI). 84–85 (AT) provides a ligand contact to (2S)-2-hydroxy-3-oxobutyl phosphate. His87 (proton donor) is an active-site residue. Phe111 serves as a coordination point for 5-amino-6-(D-ribitylamino)uracil. Arg125 contacts (2S)-2-hydroxy-3-oxobutyl phosphate.

It belongs to the DMRL synthase family.

The catalysed reaction is (2S)-2-hydroxy-3-oxobutyl phosphate + 5-amino-6-(D-ribitylamino)uracil = 6,7-dimethyl-8-(1-D-ribityl)lumazine + phosphate + 2 H2O + H(+). The protein operates within cofactor biosynthesis; riboflavin biosynthesis; riboflavin from 2-hydroxy-3-oxobutyl phosphate and 5-amino-6-(D-ribitylamino)uracil: step 1/2. Catalyzes the formation of 6,7-dimethyl-8-ribityllumazine by condensation of 5-amino-6-(D-ribitylamino)uracil with 3,4-dihydroxy-2-butanone 4-phosphate. This is the penultimate step in the biosynthesis of riboflavin. The chain is 6,7-dimethyl-8-ribityllumazine synthase from Leptospira interrogans serogroup Icterohaemorrhagiae serovar Lai (strain 56601).